The sequence spans 187 residues: Ribosome maturation factor RimM (187 aa).

The region spanning 91–183 (DDGFYDHELE…ILVLTPPEGL (93 aa)) is the PRC barrel domain.

This sequence belongs to the RimM family. Binds ribosomal protein uS19.

The protein localises to the cytoplasm. An accessory protein needed during the final step in the assembly of 30S ribosomal subunit, possibly for assembly of the head region. Essential for efficient processing of 16S rRNA. May be needed both before and after RbfA during the maturation of 16S rRNA. It has affinity for free ribosomal 30S subunits but not for 70S ribosomes. In Corynebacterium jeikeium (strain K411), this protein is Ribosome maturation factor RimM.